The chain runs to 372 residues: 3,5-dihydroxyphenylacetyl-CoA synthase (372 aa).

Residue Cys-160 is part of the active site.

Belongs to the thiolase-like superfamily. Chalcone/stilbene synthases family.

The catalysed reaction is 4 malonyl-CoA + 4 H(+) = (3,5-dihydroxyphenyl)acetyl-CoA + 4 CO2 + 3 CoA + H2O. The protein operates within antibiotic biosynthesis. Involved in the biosynthesis of the nonproteinogenic amino acid monomer (S)-3,5-dihydroxyphenylglycine (Dpg) responsible of the production of balhimycin antibiotic. Catalyzes the Claisen condensation of four molecules of malonyl-CoA to yield 3,5-dihydroxyphenylacetyl-CoA (DPA-CoA) and three free coenzyme A (CoA). DpgA requires the presence of the dehydratases DpgB and DpgD to facilitate the aromatization of the DPA-S-DgpA or DPA-S-CoA intermediate. The polypeptide is 3,5-dihydroxyphenylacetyl-CoA synthase (Amycolatopsis balhimycina).